Here is a 79-residue protein sequence, read N- to C-terminus: Sec-independent protein translocase protein TatA (79 aa).

The chain crosses the membrane as a helical span at residues 1 to 21 (MGGFTSIWHWVIVLLVIVLLF). Positions 54–79 (ELKTLDAQATQTKVHETSEIKSKQES) are disordered. Basic and acidic residues predominate over residues 66-79 (KVHETSEIKSKQES).

It belongs to the TatA/E family. The Tat system comprises two distinct complexes: a TatABC complex, containing multiple copies of TatA, TatB and TatC subunits, and a separate TatA complex, containing only TatA subunits. Substrates initially bind to the TatABC complex, which probably triggers association of the separate TatA complex to form the active translocon.

Its subcellular location is the cell inner membrane. Part of the twin-arginine translocation (Tat) system that transports large folded proteins containing a characteristic twin-arginine motif in their signal peptide across membranes. TatA could form the protein-conducting channel of the Tat system. In Helicobacter pylori (strain J99 / ATCC 700824) (Campylobacter pylori J99), this protein is Sec-independent protein translocase protein TatA.